The chain runs to 112 residues: Large ribosomal subunit protein bL17 (112 aa).

This sequence belongs to the bacterial ribosomal protein bL17 family. In terms of assembly, part of the 50S ribosomal subunit. Contacts protein L32.

The sequence is that of Large ribosomal subunit protein bL17 from Desulforudis audaxviator (strain MP104C).